The chain runs to 341 residues: Phenylalanine--tRNA ligase alpha subunit (341 aa).

A Mg(2+)-binding site is contributed by Glu252.

It belongs to the class-II aminoacyl-tRNA synthetase family. Phe-tRNA synthetase alpha subunit type 1 subfamily. In terms of assembly, tetramer of two alpha and two beta subunits. Mg(2+) is required as a cofactor.

It is found in the cytoplasm. The catalysed reaction is tRNA(Phe) + L-phenylalanine + ATP = L-phenylalanyl-tRNA(Phe) + AMP + diphosphate + H(+). The protein is Phenylalanine--tRNA ligase alpha subunit of Malacoplasma penetrans (strain HF-2) (Mycoplasma penetrans).